The primary structure comprises 822 residues: Stemar-13-ene synthase (822 aa).

Residues 1–10 (MMLLSSSYSG) show a composition bias toward polar residues. Positions 1–29 (MMLLSSSYSGGQFPGVSPLGTRPKRSTTV) are disordered. Mg(2+) contacts are provided by Asp553, Asp557, Asn698, Thr702, and Glu706. The DDXXD motif motif lies at 553–557 (DDLFD).

This sequence belongs to the terpene synthase family. Mg(2+) serves as cofactor.

It catalyses the reaction 9alpha-copalyl diphosphate = stemar-13-ene + diphosphate. Its function is as follows. Catalyzes the conversion of syn-copalyl diphosphate to the phytoalexin precursor stemarene. The polypeptide is Stemar-13-ene synthase (KSL8) (Oryza sativa subsp. japonica (Rice)).